A 236-amino-acid polypeptide reads, in one-letter code: Small ribosomal subunit protein uS3 (236 aa).

A KH type-2 domain is found at 39–107 (VRQFLTKELK…PAQINISEVR (69 aa)).

It belongs to the universal ribosomal protein uS3 family. In terms of assembly, part of the 30S ribosomal subunit. Forms a tight complex with proteins S10 and S14.

Functionally, binds the lower part of the 30S subunit head. Binds mRNA in the 70S ribosome, positioning it for translation. This Aeromonas salmonicida (strain A449) protein is Small ribosomal subunit protein uS3.